We begin with the raw amino-acid sequence, 292 residues long: Mitochondrial ornithine transporter 1 (292 aa).

Solcar repeat units follow at residues Glu11–Phe97, Ser105–Ser196, and Ser211–Leu292. Helical transmembrane passes span Ile14 to Phe34, Phe69 to Val89, Val104 to Val124, Gly171 to Phe187, Ile213 to Pro233, and Gly267 to Glu287.

This sequence belongs to the mitochondrial carrier (TC 2.A.29) family.

The protein resides in the mitochondrion inner membrane. Required for arginine biosynthesis. Transports ornithine synthesized from glutamate in the mitochondrial matrix to the cytosol, where it is converted to arginine. In Saccharomyces cerevisiae (strain ATCC 204508 / S288c) (Baker's yeast), this protein is Mitochondrial ornithine transporter 1 (ORT1).